The chain runs to 73 residues: Protein DSS1 HOMOLOG ON CHROMOSOME V (73 aa).

Belongs to the DSS1/SEM1 family. In terms of assembly, part of the 26S proteasome. Interacts with BRCA2B. Interacts with EER5. Interacts with UCH1 and UCH2.

Functionally, subunit of the 26S proteasome which plays a role in ubiquitin-dependent proteolysis. Also associates with the TREX-2 complex that is required for transcription-coupled mRNA export. The chain is Protein DSS1 HOMOLOG ON CHROMOSOME V from Arabidopsis thaliana (Mouse-ear cress).